Here is a 411-residue protein sequence, read N- to C-terminus: Arginine deiminase (411 aa).

Cys401 functions as the Amidino-cysteine intermediate in the catalytic mechanism.

This sequence belongs to the arginine deiminase family.

The protein localises to the cytoplasm. The catalysed reaction is L-arginine + H2O = L-citrulline + NH4(+). The protein operates within amino-acid degradation; L-arginine degradation via ADI pathway; carbamoyl phosphate from L-arginine: step 1/2. This Streptococcus pyogenes serotype M2 (strain MGAS10270) protein is Arginine deiminase.